The primary structure comprises 185 residues: Transmembrane protein 140 (185 aa).

At 1-11 (MAGPRPRWRDQ) the chain is on the cytoplasmic side. The chain crosses the membrane as a helical span at residues 12 to 32 (LLFMSIIVLVIVVICLMFYAL). Residues 33–77 (LWEAGNLTDLPNLRIGFYNFCLWNEDTSTLQCHQFPELEALGVPR) lie on the Extracellular side of the membrane. Residue Asn-38 is glycosylated (N-linked (GlcNAc...) asparagine). Residues 78–98 (VGLGLARLGVYGSLVLTLFAP) traverse the membrane as a helical segment. Topologically, residues 99-114 (QPLLLAQCNSDERAWR) are cytoplasmic. A helical transmembrane segment spans residues 115-135 (LAVGFLAVSSVLLAGGLGLFL). At 136-150 (SYVWKWVRLSLPGPG) the chain is on the extracellular side. The chain crosses the membrane as a helical span at residues 151 to 171 (FLALGSAQALLILLLIAMAVF). Over 172 to 185 (PLRAERAESKLESC) the chain is Cytoplasmic.

Expression significantly higher in gliomas than in normal brain tissues.

The protein resides in the membrane. The polypeptide is Transmembrane protein 140 (TMEM140) (Homo sapiens (Human)).